The following is a 139-amino-acid chain: ATP synthase epsilon chain (139 aa).

The protein belongs to the ATPase epsilon chain family. In terms of assembly, F-type ATPases have 2 components, CF(1) - the catalytic core - and CF(0) - the membrane proton channel. CF(1) has five subunits: alpha(3), beta(3), gamma(1), delta(1), epsilon(1). CF(0) has three main subunits: a, b and c.

It localises to the cell membrane. Its function is as follows. Produces ATP from ADP in the presence of a proton gradient across the membrane. The chain is ATP synthase epsilon chain from Ligilactobacillus salivarius (strain UCC118) (Lactobacillus salivarius).